The primary structure comprises 278 residues: C-type lectin domain family 1 member A (278 aa).

Residues 1–42 (MLAKYSSTRDMLDADGDTTMSLHSQASATSQRPELGHTEHQR) form a disordered region. The Cytoplasmic segment spans residues 1 to 52 (MLAKYSSTRDMLDADGDTTMSLHSQASATSQRPELGHTEHQRPSSAWRPVAL). A compositionally biased stretch (polar residues) spans 18–32 (TTMSLHSQASATSQR). A helical; Signal-anchor for type II membrane protein membrane pass occupies residues 53–73 (ILLTLCLVLLIGLAALGLVFF). The Extracellular portion of the chain corresponds to 74-278 (QFYQLSNTQQ…LHEPLSRRWR (205 aa)). 2 N-linked (GlcNAc...) asparagine glycosylation sites follow: Asn-95 and Asn-169. Residues 144–258 (HGDKCYQFYK…CRELRRCACE (115 aa)) enclose the C-type lectin domain. Cystine bridges form between Cys-165–Cys-257 and Cys-236–Cys-249.

Its subcellular location is the membrane. This is C-type lectin domain family 1 member A (CLEC1A) from Bos taurus (Bovine).